The sequence spans 309 residues: MKYRLIGVGASLVVAVMLTGCQAKATTLVKSDAGQVTQAEVFKQIENQATTQQAVQELTLNKVLNQRYHVSQAEVTAKLKAFKRQAGANYHMILERNHVTEPRLKSQIKANLLMEKAVSAKYPVTKAQLKKARAAYMPMTTVQHIATTNEKQAQKIIAELNAGASFDSQVRKYQNNRQAHTTAGKLAQFDSYNQTLAPAIVQATAKLRVGHYVTKPVKTVMATADTKDKPTYEIINVVSRRSKTAAVTDDSGKQIDVTNYLREKIQQQRMMDKQTQVATIRSVFKAAHVKVVDAHFAPAFNDYLTTQNS.

The N-terminal stretch at 1–20 (MKYRLIGVGASLVVAVMLTG) is a signal peptide. A lipid anchor (N-palmitoyl cysteine) is attached at Cys-21. The S-diacylglycerol cysteine moiety is linked to residue Cys-21. The PpiC domain occupies 137–232 (MPMTTVQHIA…TADTKDKPTY (96 aa)).

Belongs to the PrsA family.

It is found in the cell membrane. It catalyses the reaction [protein]-peptidylproline (omega=180) = [protein]-peptidylproline (omega=0). In terms of biological role, plays a major role in protein secretion by helping the post-translocational extracellular folding of several secreted proteins. The protein is Foldase protein PrsA 2 (prsA2) of Lactiplantibacillus plantarum (strain ATCC BAA-793 / NCIMB 8826 / WCFS1) (Lactobacillus plantarum).